The following is a 212-amino-acid chain: Ribosomal RNA small subunit methyltransferase G (212 aa).

S-adenosyl-L-methionine-binding positions include G73, 127-128 (IE), and R143.

It belongs to the methyltransferase superfamily. RNA methyltransferase RsmG family.

It is found in the cytoplasm. It carries out the reaction guanosine(527) in 16S rRNA + S-adenosyl-L-methionine = N(7)-methylguanosine(527) in 16S rRNA + S-adenosyl-L-homocysteine. Specifically methylates the N7 position of guanine in position 527 of 16S rRNA. This Methylobacterium nodulans (strain LMG 21967 / CNCM I-2342 / ORS 2060) protein is Ribosomal RNA small subunit methyltransferase G.